We begin with the raw amino-acid sequence, 443 residues long: MSKTLYQKIYDSHIVYEDKNSEAILYIDLHLLHEVTSPQAFNALRNKKRKVRQSKKTFATMDHNVSTKIRSIHASGSMAQKQMEQLINNCTEFNIPLYDINNPNQGIVHVIAPEKGMTLPGMTIVCGDSHTSTHGAFGTLAFGIGTSEVEHVLATQTLKQKRFKNMKVEIIGEMPKFVTAKDIILFIIGKLGSSSGAGHVIEFCGNVIKNMSMEERMTICNMAVEMGAKSGLIAPDEITYKYLKDKIYSPFGIFWEKSLDYWKFLKSDKNAYFDKCVTVDISNLAPQITWGTNPDQVISIDEKIPDYNNINSIVKRKSAKSACEYMGLQSNTYLTNISIDKVFIGSCTNARIEDLRSASKILKNKKVAKHVTAIVVPGSGLVKNQAEEEGLDKIFIDAGFEWRLPGCSMCLGMNKDRLNFGERCASHSNRNFEGRQGRGGRTH.

[4Fe-4S] cluster is bound by residues Cys347, Cys407, and Cys410.

This sequence belongs to the aconitase/IPM isomerase family. LeuC type 1 subfamily. Heterodimer of LeuC and LeuD. Requires [4Fe-4S] cluster as cofactor.

The enzyme catalyses (2R,3S)-3-isopropylmalate = (2S)-2-isopropylmalate. It functions in the pathway amino-acid biosynthesis; L-leucine biosynthesis; L-leucine from 3-methyl-2-oxobutanoate: step 2/4. Catalyzes the isomerization between 2-isopropylmalate and 3-isopropylmalate, via the formation of 2-isopropylmaleate. The chain is 3-isopropylmalate dehydratase large subunit from Buchnera aphidicola subsp. Uroleucon aeneum.